The primary structure comprises 594 residues: Nucleolar protein 56 (594 aa).

Residues Lys87, Lys230, and Lys240 each participate in a glycyl lysine isopeptide (Lys-Gly) (interchain with G-Cter in SUMO2) cross-link. Residues 292-410 form the Nop domain; the sequence is VAPSLSALIG…VEERLSFYET (119 aa). Ser314 is subject to Phosphoserine. Residue Arg359 is modified to Omega-N-methylarginine. Low complexity-rich tracts occupy residues 458–469 and 488–504; these read ALASSENSSSTP and QEVP…ISFS. Residues 458–594 form a disordered region; it reads ALASSENSSS…KKFHKASQED (137 aa). Phosphoserine is present on residues Ser466 and Ser467. Position 468 is a phosphothreonine (Thr468). Ser511, Ser519, Ser520, and Ser537 each carry phosphoserine. Lys540 participates in a covalent cross-link: Glycyl lysine isopeptide (Lys-Gly) (interchain with G-Cter in SUMO2). Lys561 carries the N6-acetyllysine modification. Ser563 is modified (phosphoserine). Lys564 is covalently cross-linked (Glycyl lysine isopeptide (Lys-Gly) (interchain with G-Cter in SUMO2)). 4 positions are modified to phosphoserine: Ser569, Ser570, Ser579, and Ser581. Basic residues predominate over residues 580-594; it reads SSKKKKKFHKASQED.

The protein belongs to the NOP5/NOP56 family. In terms of assembly, part of a large pre-ribosomal ribonucleoprotein (RNP) complex, that consists of at least 62 ribosomal proteins, 45 nonribosomal proteins and both pre-rRNA and mature rRNA species. Within this complex directly interacts with TCOF1 in an RNA-independent manner. Core component of box C/D small nucleolar ribonucleoprotein (snoRNP) particles; the core proteins SNU13, NOP56, NOP58 and FBL or FBLL1 assemble stepwise onto the snoRNA. Interacts with NOP1 and NOP58. Interacts with NUFIP1, RUVBL1 and RUVBL2; RUVBL1:RUVBL2 seem to bridge the association of NOP56 with NUFIP1. Part of the small subunit (SSU) processome, composed of more than 70 proteins and the RNA chaperone small nucleolar RNA (snoRNA) U3. Interacts with NOP2 and FBL.

The protein resides in the nucleus. The protein localises to the nucleolus. Its subcellular location is the cytoplasm. It is found in the nucleoplasm. Involved in the early to middle stages of 60S ribosomal subunit biogenesis. Required for the biogenesis of box C/D snoRNAs such U3, U8 and U14 snoRNAs. Part of the small subunit (SSU) processome, first precursor of the small eukaryotic ribosomal subunit. During the assembly of the SSU processome in the nucleolus, many ribosome biogenesis factors, an RNA chaperone and ribosomal proteins associate with the nascent pre-rRNA and work in concert to generate RNA folding, modifications, rearrangements and cleavage as well as targeted degradation of pre-ribosomal RNA by the RNA exosome. Core component of box C/D small nucleolar ribonucleoprotein (snoRNP) complexes that function in methylation of multiple sites on ribosomal RNAs (rRNAs) and messenger RNAs (mRNAs). This chain is Nucleolar protein 56, found in Homo sapiens (Human).